The following is a 667-amino-acid chain: Transcription factor 4 (667 aa).

The interval 1 to 83 (MHHQQRMAAL…GTPYDHMTSR (83 aa)) is essential for MYOD1 inhibition. A 9aaTAD motif is present at residues 18–26 (DLLDFSAMF). Disordered stretches follow at residues 24-245 (AMFS…LGNS), 263-321 (LSYP…SQTG), 336-379 (HTNN…EGPL), 466-570 (SLLP…MANN), and 634-667 (KRRE…MGQM). Positions 29–49 (PVSSGKNGPTSLASGHFTGSN) are enriched in polar residues. Residues S66, S87, and S92 each carry the phosphoserine modification. Polar residues-rich tracts occupy residues 107-126 (GSYS…QQSL), 137-155 (GTLS…SSNN), 205-216 (KPATSTFPSSFF), and 266-306 (PSHS…TDSI). Residues 337-348 (TNNSFSSNPSTP) show a composition bias toward low complexity. The segment covering 365 to 374 (NGGQASSSPN) has biased composition (polar residues). The residue at position 372 (S372) is a Phosphoserine. The tract at residues 379–400 (LHSLQSRIEDRLERLDDAIHVL) is leucine-zipper. 2 stretches are compositionally biased toward low complexity: residues 467-480 (LLPN…LPVQ) and 503-512 (GQSVSSGSSE). Residue S515 is modified to Phosphoserine. Basic and acidic residues-rich tracts occupy residues 527–542 (KSSE…KDIK) and 555–570 (PEQK…MANN). In terms of domain architecture, bHLH spans 564 to 617 (ERRMANNARERLRVRDINEAFKELGRMVQLHLKSDKPQTKLLILHQAVAVILSL). The class A specific domain stretch occupies residues 619–642 (QQVRERNLNPKAACLKRREEEKVS).

Efficient DNA binding requires dimerization with another bHLH protein. Forms homo- or heterooligomers with myogenin. Interacts with HIVEP2. Interacts with NEUROD2. Interacts with AGBL1. Interacts with BHLHA9. Expressed in adult heart, brain, placenta, skeletal muscle and to a lesser extent in the lung. In developing embryonic tissues, expression mostly occurs in the brain.

It localises to the nucleus. In terms of biological role, transcription factor that binds to the immunoglobulin enhancer Mu-E5/KE5-motif. Involved in the initiation of neuronal differentiation. Activates transcription by binding to the E box (5'-CANNTG-3'). Binds to the E-box present in the somatostatin receptor 2 initiator element (SSTR2-INR) to activate transcription. Preferentially binds to either 5'-ACANNTGT-3' or 5'-CCANNTGG-3'. The polypeptide is Transcription factor 4 (TCF4) (Homo sapiens (Human)).